The sequence spans 411 residues: Putative ion-transport protein YfeO (411 aa).

Transmembrane regions (helical) follow at residues 9–29, 54–74, 99–119, 149–169, 186–206, 223–243, 258–278, 296–316, 322–342, 343–363, and 386–406; these read MLLL…VLIA, DSPF…GLII, ALPG…SLGP, ILAS…AALI, LFAP…FFHP, IASG…AVWC, VLIL…GGPL, LGAG…VIAA, GGRI…LHAH, VEAV…VLVV, and LLCI…LLAA.

This sequence belongs to the chloride channel (TC 2.A.49) family.

It is found in the cell membrane. This is Putative ion-transport protein YfeO from Salmonella agona (strain SL483).